The following is a 21-amino-acid chain: Hemocyanin subunit 6 (21 aa).

Belongs to the tyrosinase family. Hemocyanin subfamily. In terms of tissue distribution, hemolymph.

It localises to the secreted. It is found in the extracellular space. Its function is as follows. Hemocyanins are copper-containing oxygen carriers occurring freely dissolved in the hemolymph of many mollusks and arthropods. This chain is Hemocyanin subunit 6, found in Maja squinado (Mediterranean spider crab).